The sequence spans 221 residues: Ribonuclease T (221 aa).

Positions 21–195 (VVVDVETAGF…YDAEKTADLF (175 aa)) constitute an Exonuclease domain. Positions 24, 26, 182, and 187 each coordinate Mg(2+). The Proton donor/acceptor role is filled by His-182.

This sequence belongs to the RNase T family. As to quaternary structure, homodimer. Mg(2+) serves as cofactor.

In terms of biological role, trims short 3' overhangs of a variety of RNA species, leaving a one or two nucleotide 3' overhang. Responsible for the end-turnover of tRNA: specifically removes the terminal AMP residue from uncharged tRNA (tRNA-C-C-A). Also appears to be involved in tRNA biosynthesis. The sequence is that of Ribonuclease T from Marinobacter nauticus (strain ATCC 700491 / DSM 11845 / VT8) (Marinobacter aquaeolei).